The following is a 63-amino-acid chain: Putative ankyrin repeat protein RF_p14 (63 aa).

2 ANK repeats span residues 11-43 (KLNQKLMRAAATGDIEAVQKLVLRGADIYCRDH) and 44-63 (QGDTALSLAAGSGYLDILDI).

The sequence is that of Putative ankyrin repeat protein RF_p14 from Rickettsia felis (strain ATCC VR-1525 / URRWXCal2) (Rickettsia azadi).